Here is a 303-residue protein sequence, read N- to C-terminus: Bifunctional protein FolD (303 aa).

NADP(+)-binding positions include 175-177 (GVS) and Ile243.

The protein belongs to the tetrahydrofolate dehydrogenase/cyclohydrolase family. In terms of assembly, homodimer.

The catalysed reaction is (6R)-5,10-methylene-5,6,7,8-tetrahydrofolate + NADP(+) = (6R)-5,10-methenyltetrahydrofolate + NADPH. It carries out the reaction (6R)-5,10-methenyltetrahydrofolate + H2O = (6R)-10-formyltetrahydrofolate + H(+). Its pathway is one-carbon metabolism; tetrahydrofolate interconversion. Functionally, catalyzes the oxidation of 5,10-methylenetetrahydrofolate to 5,10-methenyltetrahydrofolate and then the hydrolysis of 5,10-methenyltetrahydrofolate to 10-formyltetrahydrofolate. The sequence is that of Bifunctional protein FolD from Xanthomonas axonopodis pv. citri (strain 306).